Reading from the N-terminus, the 418-residue chain is Tektin-1 (418 aa).

Coiled coils occupy residues Asn-20–Glu-107, Gln-134–Asp-177, Asn-266–Gly-308, and Val-332–Ile-383.

It belongs to the tektin family. As to quaternary structure, microtubule inner protein component of sperm flagellar doublet microtubules. In terms of processing, ubiquitinated, leading to its degradation. Deubiquitinated by USP16, promoting its stability. Predominantly expressed in testis.

The protein resides in the cytoplasm. Its subcellular location is the cytoskeleton. The protein localises to the cilium axoneme. It is found in the flagellum axoneme. In terms of biological role, microtubule inner protein (MIP) part of the dynein-decorated doublet microtubules (DMTs) in cilia and flagellar axoneme. Forms filamentous polymers in the walls of ciliary and flagellar microtubules. This Rattus norvegicus (Rat) protein is Tektin-1 (Tekt1).